A 140-amino-acid polypeptide reads, in one-letter code: Heavy metal-associated isoprenylated plant protein 31 (140 aa).

One can recognise an HMA domain in the interval methionine 3 to glutamate 67. Cysteine 14 and cysteine 17 together coordinate a metal cation. Position 137 is a cysteine methyl ester (cysteine 137). Cysteine 137 carries the S-farnesyl cysteine lipid modification. Residues threonine 138 to methionine 140 constitute a propeptide, removed in mature form.

The protein belongs to the HIPP family.

Its function is as follows. Heavy-metal-binding protein. The sequence is that of Heavy metal-associated isoprenylated plant protein 31 from Arabidopsis thaliana (Mouse-ear cress).